The primary structure comprises 50 residues: Large ribosomal subunit protein bL33 (50 aa).

It belongs to the bacterial ribosomal protein bL33 family.

This chain is Large ribosomal subunit protein bL33, found in Mycoplasmopsis synoviae (strain 53) (Mycoplasma synoviae).